We begin with the raw amino-acid sequence, 171 residues long: uncharacterized protein (171 aa).

Residues 3 to 171 (KKVAIILANE…FNREIVKQLQ (169 aa)) enclose the PfpI endopeptidase domain.

The protein belongs to the peptidase C56 family.

This is an uncharacterized protein from Staphylococcus aureus (strain COL).